The chain runs to 119 residues: Putative ankyrin repeat domain-containing protein 26-like 1 (119 aa).

Residues 15 to 112 (EKEEDLLHKN…EKQSRQRLTK (98 aa)) are a coiled coil.

The chain is Putative ankyrin repeat domain-containing protein 26-like 1 (ANKRD36BP1) from Homo sapiens (Human).